Here is a 1341-residue protein sequence, read N- to C-terminus: WASH complex subunit 2A (1341 aa).

The interval 1–220 (MMNRTTPDQE…VGSDRGSIVD (220 aa)) is sufficient for interaction with WASHC3, WASHC4 and WASHC5; required for interaction with WASHC1. Residues 202–214 (GELSSEEGSVGSD) are compositionally biased toward low complexity. Residues 202 to 405 (GELSSEEGSV…SSSKPGKKIP (204 aa)) are disordered. The span at 220–232 (DTEEEKEEEESDE) shows a compositional bias: acidic residues. Positions 233–244 (DFAHHSDNEQNR) are enriched in basic and acidic residues. Acidic residues-rich tracts occupy residues 250–259 (SDEEEDDDGC) and 266–276 (EKEEEDIEDIE). The span at 293 to 307 (LAARIKGDAVGRVDE) shows a compositional bias: basic and acidic residues. Residues 355–366 (GSGGGLFSGGKG) are compositionally biased toward gly residues. A sufficient for interaction with CCDC93 region spans residues 356-600 (SGGGLFSGGK…QTLCLQAQRE (245 aa)). The required for interaction with CCDC22 and VPS35L stretch occupies residues 356 to 742 (SGGGLFSGGK…KEAQLGVKSV (387 aa)). An interaction with VPS35 region spans residues 357 to 1341 (GGGLFSGGKG…DDPLNAFGGQ (985 aa)). 4 consecutive short sequence motifs (LFa) follow at residues 367-378 (LFDDEDEESDLF), 411-419 (VFLGDTDVF), 450-463 (LFDD…DDFF), and 482-491 (IFGDEEGDLF). The interval 422 to 554 (ASVPSMKEPQ…EDLFSSQSAS (133 aa)) is disordered. A compositionally biased stretch (acidic residues) spans 451-462 (FDDDDGDDDDDF). The segment covering 507-517 (DENKARAEKKV) has biased composition (basic and acidic residues). Residues 518–536 (TLSSSKNLKPSSETKTQKG) are compositionally biased toward polar residues. Short sequence motifs (LFa) lie at residues 537–548 (LFSDEEDSEDLF), 572–583 (LFDDEDEEDNLF), and 617–629 (LFSS…WNIP). Ser-539 is modified (phosphoserine). 3 disordered regions span residues 621–664 (DEED…KTSL), 696–739 (DSGG…QLGV), and 751–838 (ESLK…KSTG). The span at 637–647 (SDSRSKGEPRD) shows a compositional bias: basic and acidic residues. 3 short sequence motifs (LFa) span residues 664–674 (LFEEDEEDDLF), 690–702 (LFED…GSLF), and 726–738 (LFSD…AQLG). Residues 751 to 768 (ESLKFGRTDVAESEKEGL) are compositionally biased toward basic and acidic residues. Positions 803–817 (LFDEEEDKMEDQNII) match the LFa 11 motif. Positions 823–834 (EVGKGRDPDAHP) are enriched in basic and acidic residues. Short sequence motifs (LFa) lie at residues 839 to 847 (VFQDEELLF), 856 to 862 (DPDVDLF), and 878 to 888 (LFGDDEDDDLF). Disordered stretches follow at residues 881-951 (DDED…KEPS) and 988-1205 (FPSS…LEDE). Composition is skewed to basic and acidic residues over residues 898–911 (QEKK…HSVD) and 917–931 (KHPE…KGIW). Positions 937-1341 (QDSSGLAPFK…DDPLNAFGGQ (405 aa)) are interaction with phospholipids. A compositionally biased stretch (basic residues) spans 1028 to 1046 (NKSRVKMRGKRRPQTRAAR). The segment at 1029–1047 (KSRVKMRGKRRPQTRAARR) is required for interaction with F-actin-capping protein subunit alpha (CAPZA1 or CAPZA2 or CAPZA3). Phosphoserine is present on residues Ser-1054 and Ser-1087. The span at 1094 to 1110 (EALAAAAAPWEGGPVPG) shows a compositional bias: low complexity. Residue Ser-1114 is modified to Phosphoserine. Short sequence motifs (LFa) lie at residues 1129 to 1136 (LFDSGDIF), 1171 to 1185 (MFPA…DDLF), 1201 to 1209 (LLEDEDDLF), 1234 to 1240 (IFEDDIF), 1262 to 1270 (LFDDNIDIF), and 1290 to 1299 (IFDDDMDDIF). Residues 1135 to 1145 (IFSTGTGSQSV) show a composition bias toward polar residues. Residues 1302–1326 (GIQAKTTKPKSRSAQAAPEPRFEHK) form a disordered region. The LFa 21 signature appears at 1330–1338 (IFDDPLNAF).

Belongs to the FAM21 family. As to quaternary structure, component of the WASH core complex also described as WASH regulatory complex (SHRC) composed of WASH (WASHC1, WASH2P or WASH3P), WASHC2 (WASHC2A or WASHC2C), WASHC3, WASHC4 and WASHC5; in the complex interacts (via N-terminus) directly with WASHC1. The WASH core complex associates with the F-actin-capping protein dimer (formed by CAPZA1, CAPZA2 or CAPZA3 and CAPZB) in a transient or substoichiometric manner which was initially described as WASH complex. Interacts with VPS35; mediates the association with the retromer CSC complex. Interacts with FKBP15. Interacts with CCDC93, CCDC22, VPS35L; indicative for an association of the WASH core complex with the CCC and retriever complexes. Directly interacts with TBC1D23.

The protein resides in the early endosome membrane. It is found in the cell membrane. In terms of biological role, acts at least in part as component of the WASH core complex whose assembly at the surface of endosomes inhibits WASH nucleation-promoting factor (NPF) activity in recruiting and activating the Arp2/3 complex to induce actin polymerization and is involved in the fission of tubules that serve as transport intermediates during endosome sorting. Mediates the recruitment of the WASH core complex to endosome membranes via binding to phospholipids and VPS35 of the retromer CSC. Mediates the recruitment of the F-actin-capping protein dimer to the WASH core complex probably promoting localized F-actin polymerization needed for vesicle scission. Via its C-terminus binds various phospholipids, most strongly phosphatidylinositol 4-phosphate (PtdIns-(4)P), phosphatidylinositol 5-phosphate (PtdIns-(5)P) and phosphatidylinositol 3,5-bisphosphate (PtdIns-(3,5)P2). Involved in the endosome-to-plasma membrane trafficking and recycling of SNX27-retromer-dependent cargo proteins, such as GLUT1. Required for the association of DNAJC13, ENTR1, ANKRD50 with retromer CSC subunit VPS35. Required for the endosomal recruitment of CCC complex subunits COMMD1 and CCDC93 as well as the retriever complex subunit VPS35L. The protein is WASH complex subunit 2A of Homo sapiens (Human).